Here is a 248-residue protein sequence, read N- to C-terminus: 1-(5-phosphoribosyl)-5-[(5-phosphoribosylamino)methylideneamino] imidazole-4-carboxamide isomerase (248 aa).

Catalysis depends on Asp-7, which acts as the Proton acceptor. Residue Asp-131 is the Proton donor of the active site.

It belongs to the HisA/HisF family.

The protein localises to the cytoplasm. The enzyme catalyses 1-(5-phospho-beta-D-ribosyl)-5-[(5-phospho-beta-D-ribosylamino)methylideneamino]imidazole-4-carboxamide = 5-[(5-phospho-1-deoxy-D-ribulos-1-ylimino)methylamino]-1-(5-phospho-beta-D-ribosyl)imidazole-4-carboxamide. It functions in the pathway amino-acid biosynthesis; L-histidine biosynthesis; L-histidine from 5-phospho-alpha-D-ribose 1-diphosphate: step 4/9. The protein is 1-(5-phosphoribosyl)-5-[(5-phosphoribosylamino)methylideneamino] imidazole-4-carboxamide isomerase of Baumannia cicadellinicola subsp. Homalodisca coagulata.